The following is a 463-amino-acid chain: Thiamine-repressible acid phosphatase SPBC21H7.03c (463 aa).

The first 18 residues, 1 to 18 (MQLCIISLWFLAAFIVNA), serve as a signal peptide directing secretion. The active-site Nucleophile is the histidine 69. Residues asparagine 98, asparagine 104, asparagine 221, and asparagine 324 are each glycosylated (N-linked (GlcNAc...) asparagine). Aspartate 341 acts as the Proton donor in catalysis. 2 N-linked (GlcNAc...) asparagine glycosylation sites follow: asparagine 439 and asparagine 458.

The protein belongs to the histidine acid phosphatase family.

The protein localises to the secreted. Its subcellular location is the cell wall. The catalysed reaction is a phosphate monoester + H2O = an alcohol + phosphate. Functionally, may dephosphorylate thiamine phosphates. The polypeptide is Thiamine-repressible acid phosphatase SPBC21H7.03c (Schizosaccharomyces pombe (strain 972 / ATCC 24843) (Fission yeast)).